The following is a 108-amino-acid chain: Phosphoribosyl-ATP pyrophosphatase (108 aa).

The protein belongs to the PRA-PH family.

The protein localises to the cytoplasm. It carries out the reaction 1-(5-phospho-beta-D-ribosyl)-ATP + H2O = 1-(5-phospho-beta-D-ribosyl)-5'-AMP + diphosphate + H(+). It participates in amino-acid biosynthesis; L-histidine biosynthesis; L-histidine from 5-phospho-alpha-D-ribose 1-diphosphate: step 2/9. In Dechloromonas aromatica (strain RCB), this protein is Phosphoribosyl-ATP pyrophosphatase.